Consider the following 325-residue polypeptide: Holliday junction branch migration complex subunit RuvB (325 aa).

Residues 1–181 form a large ATPase domain (RuvB-L) region; sequence MENRLINPVE…FGIVQRLEFY (181 aa). ATP-binding positions include Ile-20, Arg-21, Gly-62, Lys-65, Thr-66, Thr-67, 128–130, Arg-171, Tyr-181, and Arg-218; that span reads EDF. Residue Thr-66 coordinates Mg(2+). Positions 182-252 are small ATPAse domain (RuvB-S); sequence NIEDLTTIVS…IADSALDMLA (71 aa). The tract at residues 255-325 is head domain (RuvB-H); that stretch reads RRGLDHLDRR…VLTQMAIDQL (71 aa). DNA contacts are provided by Arg-291, Arg-310, and Arg-315.

This sequence belongs to the RuvB family. As to quaternary structure, homohexamer. Forms an RuvA(8)-RuvB(12)-Holliday junction (HJ) complex. HJ DNA is sandwiched between 2 RuvA tetramers; dsDNA enters through RuvA and exits via RuvB. An RuvB hexamer assembles on each DNA strand where it exits the tetramer. Each RuvB hexamer is contacted by two RuvA subunits (via domain III) on 2 adjacent RuvB subunits; this complex drives branch migration. In the full resolvosome a probable DNA-RuvA(4)-RuvB(12)-RuvC(2) complex forms which resolves the HJ.

The protein localises to the cytoplasm. The enzyme catalyses ATP + H2O = ADP + phosphate + H(+). The RuvA-RuvB-RuvC complex processes Holliday junction (HJ) DNA during genetic recombination and DNA repair, while the RuvA-RuvB complex plays an important role in the rescue of blocked DNA replication forks via replication fork reversal (RFR). RuvA specifically binds to HJ cruciform DNA, conferring on it an open structure. The RuvB hexamer acts as an ATP-dependent pump, pulling dsDNA into and through the RuvAB complex. RuvB forms 2 homohexamers on either side of HJ DNA bound by 1 or 2 RuvA tetramers; 4 subunits per hexamer contact DNA at a time. Coordinated motions by a converter formed by DNA-disengaged RuvB subunits stimulates ATP hydrolysis and nucleotide exchange. Immobilization of the converter enables RuvB to convert the ATP-contained energy into a lever motion, pulling 2 nucleotides of DNA out of the RuvA tetramer per ATP hydrolyzed, thus driving DNA branch migration. The RuvB motors rotate together with the DNA substrate, which together with the progressing nucleotide cycle form the mechanistic basis for DNA recombination by continuous HJ branch migration. Branch migration allows RuvC to scan DNA until it finds its consensus sequence, where it cleaves and resolves cruciform DNA. The polypeptide is Holliday junction branch migration complex subunit RuvB (Psychrobacter sp. (strain PRwf-1)).